We begin with the raw amino-acid sequence, 160 residues long: Transcriptional repressor NrdR (160 aa).

A zinc finger spans residues 3–34 (CPSCQNTDSRVLESRAADGGRSVRRRRECLNC). Positions 49–139 (ITVIKRNGNR…VYRQFRGIDD (91 aa)) constitute an ATP-cone domain.

This sequence belongs to the NrdR family. Zn(2+) serves as cofactor.

Negatively regulates transcription of bacterial ribonucleotide reductase nrd genes and operons by binding to NrdR-boxes. The sequence is that of Transcriptional repressor NrdR from Synechococcus sp. (strain CC9605).